Consider the following 271-residue polypeptide: Formamidopyrimidine-DNA glycosylase (271 aa).

The active-site Schiff-base intermediate with DNA is the P2. E3 serves as the catalytic Proton donor. The active-site Proton donor; for beta-elimination activity is the K58. Positions 91, 110, and 152 each coordinate DNA. The FPG-type zinc-finger motif lies at 237-271 (RVYDRAGQPCRVCGEPIRCVRLGQRATYYCPRCQR). R261 serves as the catalytic Proton donor; for delta-elimination activity.

The protein belongs to the FPG family. Monomer. Requires Zn(2+) as cofactor.

The catalysed reaction is Hydrolysis of DNA containing ring-opened 7-methylguanine residues, releasing 2,6-diamino-4-hydroxy-5-(N-methyl)formamidopyrimidine.. It carries out the reaction 2'-deoxyribonucleotide-(2'-deoxyribose 5'-phosphate)-2'-deoxyribonucleotide-DNA = a 3'-end 2'-deoxyribonucleotide-(2,3-dehydro-2,3-deoxyribose 5'-phosphate)-DNA + a 5'-end 5'-phospho-2'-deoxyribonucleoside-DNA + H(+). Involved in base excision repair of DNA damaged by oxidation or by mutagenic agents. Acts as a DNA glycosylase that recognizes and removes damaged bases. Has a preference for oxidized purines, such as 7,8-dihydro-8-oxoguanine (8-oxoG). Has AP (apurinic/apyrimidinic) lyase activity and introduces nicks in the DNA strand. Cleaves the DNA backbone by beta-delta elimination to generate a single-strand break at the site of the removed base with both 3'- and 5'-phosphates. This chain is Formamidopyrimidine-DNA glycosylase, found in Methylococcus capsulatus (strain ATCC 33009 / NCIMB 11132 / Bath).